We begin with the raw amino-acid sequence, 282 residues long: Anamorsin homolog (282 aa).

An N-terminal SAM-like domain region spans residues 1–140 (MADLQGKAVL…KPVYEVGAAA (140 aa)). The segment at 141-192 (PLKLSFAKKKQSGAAAPAAQVAEVWTIATDDFDDDDLLENDGDELLDAEDLA) is linker. 4 residues coordinate [2Fe-2S] cluster: Cys-203, Cys-214, Cys-217, and Cys-219. The segment at 203–219 (CEVGAGGKRRACKNCTC) is fe-S binding site A. [4Fe-4S] cluster is bound by residues Cys-243, Cys-246, Cys-254, and Cys-257. 2 short sequence motifs (cx2C motif) span residues 243 to 246 (CGNC) and 254 to 257 (CASC). Positions 243–257 (CGNCYLGDAFRCASC) are fe-S binding site B.

Belongs to the anamorsin family. Monomer. It depends on [2Fe-2S] cluster as a cofactor. [4Fe-4S] cluster serves as cofactor.

The protein resides in the cytoplasm. The protein localises to the mitochondrion intermembrane space. Its function is as follows. Component of the cytosolic iron-sulfur (Fe-S) protein assembly (CIA) machinery. Required for the maturation of extramitochondrial Fe-S proteins. Part of an electron transfer chain functioning in an early step of cytosolic Fe-S biogenesis, facilitating the de novo assembly of a [4Fe-4S] cluster on the cytosolic Fe-S scaffold complex. Electrons are transferred from NADPH via a FAD- and FMN-containing diflavin oxidoreductase. Together with the diflavin oxidoreductase, also required for the assembly of the diferric tyrosyl radical cofactor of ribonucleotide reductase (RNR), probably by providing electrons for reduction during radical cofactor maturation in the catalytic small subunit. In Monosiga brevicollis (Choanoflagellate), this protein is Anamorsin homolog.